Consider the following 236-residue polypeptide: CD81 antigen (236 aa).

Residues Met-1–Tyr-12 lie on the Cytoplasmic side of the membrane. A helical membrane pass occupies residues Leu-13–Leu-33. At Trp-34–Tyr-63 the chain is on the extracellular side. A helical membrane pass occupies residues Ile-64–Ile-84. The Cytoplasmic segment spans residues Gln-85–Cys-89. A helical transmembrane segment spans residues Leu-90 to Gly-112. The Extracellular portion of the chain corresponds to Phe-113 to Lys-201. Cystine bridges form between Cys-156/Cys-190 and Cys-157/Cys-175. The chain crosses the membrane as a helical span at residues Leu-202 to Met-224. Glu-219 contacts cholesterol. Topologically, residues Val-225–Tyr-236 are cytoplasmic.

The protein belongs to the tetraspanin (TM4SF) family. In terms of assembly, homodimer. Part of a complex composed of CD19, CR2/CD21, CD81 and IFITM1/CD225 in the membrane of mature B cells. Interacts (via the second extracellular domain) with CD19; this interaction is initiated early during biosynthesis in the ER and enables trafficking of only properly folded CD19. Part of a complex that includes MHC class II/HLA-DR molecules and IFITM1. Interacts with IFITM1. Interacts with IFITM2 and IFITM3. Part of integrin-tetraspanin complex composed of CD9, CD81, beta-1 and beta-2 integrins in the membrane of monocyte/macrophages. Interacts (via the second extracellular domain) with integrin ITGAV:ITGB3. Interacts with CD247/CD3 zeta, ICAM1 and CD9 at the immune synapse on T cell membrane. Part of a GPCR-tetraspanin complex consisting at least of ADGRG1, CD81, possibly CD9, and GNA11 in which CD81 enhances the association of ADGRG1 with GNA11. Part of a complex composed of CD9, CD81, PTGFRN and IGSF8. Interacts directly with IGSF8. Interacts with CD53 and SCIMP. Interacts with SAMHD1 (via its C-terminus). Interacts with glypican GPC3 and with the transcriptional repressor HHEX; binding to GPC3 decreases the availability of free CD81 for binding to HHEX, resulting in nuclear translocation of HHEX and transcriptional repression. Interacts with CLDN1. Interacts with CLDN6 and CLDN9. Post-translationally, not glycosylated. Likely constitutively palmitoylated at low levels. Protein palmitoylation is up-regulated upon coligation of BCR and CD9-C2R-CD81 complexes in lipid rafts. Expressed in oocytes (at protein level). Highly expressed in granulosa cells. Expressed in skeletal muscle mainly in endothelial cells of endomysial capillaries, in satellite cells and myoblasts (at protein level). Expressed in hepatocytes (at protein level).

It localises to the cell membrane. It is found in the basolateral cell membrane. In terms of biological role, structural component of specialized membrane microdomains known as tetraspanin-enriched microdomains (TERMs), which act as platforms for receptor clustering and signaling. Essential for trafficking and compartmentalization of CD19 receptor on the cell surface of activated B cells. Upon initial encounter with a microbial pathogen, enables the assembly of CD19-CR2 and B cell receptor complexes at signaling TERMs, lowering the threshold dose of antigen required to trigger B cell clonal expansion and humoral immune response. In T cells, associates with CD4 or CD8 coreceptors and defines the maturation state of antigen-induced synapses with B cells. Facilitates localization of CD3 in these immune synapses, required for costimulation and sustained activation of T cells, preferentially triggering T helper type 2 immune response. Can act both as positive and negative regulator of homotypic or heterotypic cell-cell fusion processes. In myoblasts, associates with another tetraspanin CD9 in complex with PTGFRN and inhibits myotube fusion during muscle regeneration. In macrophages, associates with CD9 and beta-1 and beta-2 integrins, and prevents macrophage fusion into multinucleated giant cells specialized in ingesting complement-opsonized large particles. Also prevents the fusion between mononuclear cell progenitors into osteoclasts in charge of bone resorption. Positively regulates sperm-egg fusion and may be involved in the acrosome reaction. Regulates protein trafficking in intracellular compartments. In T cells, associates with dNTPase SAMHD1 and defines its subcellular location, enabling its degradation by the proteasome and thereby controlling intracellular dNTP levels. Also regulates integrin-dependent migration of macrophages, particularly relevant for inflammatory response in the lung. (Microbial infection) Specifically required for Plasmodium yoelii infectivity of hepatocytes, controlling sporozoite entry in hepatocytes via the parasitophorous vacuole and subsequent parasite differentiation to exoerythrocytic forms. This chain is CD81 antigen, found in Mus musculus (Mouse).